Consider the following 101-residue polypeptide: Small ribosomal subunit protein uS14 (101 aa).

Belongs to the universal ribosomal protein uS14 family. Part of the 30S ribosomal subunit. Contacts proteins S3 and S10.

Binds 16S rRNA, required for the assembly of 30S particles and may also be responsible for determining the conformation of the 16S rRNA at the A site. The protein is Small ribosomal subunit protein uS14 of Haemophilus influenzae (strain 86-028NP).